The sequence spans 85 residues: BmK AGP-SYPU2 (85 aa).

A signal peptide spans methionine 1 to serine 19. The region spanning lysine 21–asparagine 83 is the LCN-type CS-alpha/beta domain. 4 disulfide bridges follow: cysteine 31–cysteine 82, cysteine 35–cysteine 55, cysteine 41–cysteine 65, and cysteine 45–cysteine 67.

This sequence belongs to the long (4 C-C) scorpion toxin superfamily. Sodium channel inhibitor family. Alpha subfamily. As to expression, expressed by the venom gland.

The protein resides in the secreted. Its function is as follows. Alpha toxins bind voltage-independently at site-3 of sodium channels (Nav) and inhibit the inactivation of the activated channels, thereby blocking neuronal transmission. Shows analgesic activity when intraperitoneally injected into mice. This is BmK AGP-SYPU2 from Olivierus martensii (Manchurian scorpion).